Here is a 205-residue protein sequence, read N- to C-terminus: uncharacterized protein (205 aa).

A signal peptide spans 1-18 (MKASLALLSLLTAFTSHS).

This is an uncharacterized protein from Escherichia coli (strain K12).